Here is a 436-residue protein sequence, read N- to C-terminus: UPF0597 protein YhaM (436 aa).

Belongs to the UPF0597 family.

The polypeptide is UPF0597 protein YhaM (Escherichia coli O7:K1 (strain IAI39 / ExPEC)).